A 483-amino-acid polypeptide reads, in one-letter code: MAWRLTVPELQDQLQCPICLEVFKEPLMLQCGHSYCKDCLDNLSQHLDSELCCPVCRQSVDCSSSPPNVSLARVIDALRLPGDIEPTVCVHHRNPLSLFCEKDQEFICGLCGLLGSHQHHRVTPVSTVYSRMKEELAGRISELKEEHRNVEEHIGKLVNNRTRIINESDVFSWVIRREFQELHHLVDEEKARCLEGLEGHTRGLVASLDMQLEQAQGTQERLAQAEQVLEQFGNESHHEFIRFHSVASRAEVQQARPLEGVFSPISFKPALHQADIKLTVWKRLFRKVLPAPASLKLDPATAHPLLELSKGNTVVHCGLLAQRRASQPERFDYSTCVLASKGFSWGRHYWEVVVGSKSDWRLGVIKGTASRKGKLNKSPEHGVWLIGLKEGRVYEAFGCPRLPLPVAGHPHRIGVYLHYEQGELTFFDADRPDDLRTLYTFQADFQGKLYPILDTCWHERGSNSLPMVLPPPSGPGHFTLGQV.

The RING-type zinc finger occupies 16-57 (CPICLEVFKEPLMLQCGHSYCKDCLDNLSQHLDSELCCPVCR). The B box-type zinc-finger motif lies at 84–125 (IEPTVCVHHRNPLSLFCEKDQEFICGLCGLLGSHQHHRVTPV). Positions 89, 92, 111, and 117 each coordinate Zn(2+). Coiled coils occupy residues 127–169 (TVYS…NESD) and 203–236 (GLVASLDMQLEQAQGTQERLAQAEQVLEQFGNES). The B30.2/SPRY domain maps to 275 to 474 (DIKLTVWKRL…LPMVLPPPSG (200 aa)). An N6-acetyllysine modification is found at Lys372.

Belongs to the TRIM/RBCC family. As to quaternary structure, can form dimers and trimers. Interacts with several E2 ubiquitin-conjugating enzymes, including UBE2L6, UBE2E1, UBE2E3. No interaction with UBE2H. Interacts with BECN1. Interacts with SQSTM1. Interacts with NLRP3. Post-translationally, auto-ubiquitinated. Acetylated by EP300 and KAT2B. HDAC6 drives TRIM50 deacetylation. Acetylation antagonizes with TRIM50 ubiquitination. As to expression, expressed in the stomach.

It localises to the cytoplasm. It carries out the reaction S-ubiquitinyl-[E2 ubiquitin-conjugating enzyme]-L-cysteine + [acceptor protein]-L-lysine = [E2 ubiquitin-conjugating enzyme]-L-cysteine + N(6)-ubiquitinyl-[acceptor protein]-L-lysine.. E3 ubiquitin-protein ligase that ubiquitinates Beclin-1/BECN1 in a 'Lys-63'-dependent manner enhancing its binding to ULK1. In turn, promotes starvation-induced autophagy activation. Also interacts with p62/SQSTM1 protein and thereby induces the formation and the autophagy clearance of aggresome-associated polyubiquitinated proteins through HDAC6 interaction. Also promotes NLRP3 inflammasome activation by directly inducing NLRP3 oligomerization independent of its E3 ligase function. This chain is E3 ubiquitin-protein ligase TRIM50 (Trim50), found in Mus musculus (Mouse).